The primary structure comprises 203 residues: Holliday junction branch migration complex subunit RuvA (203 aa).

The tract at residues Met-1–Tyr-63 is domain I. The segment at Asp-64–Gly-142 is domain II. The interval Gln-143 to Asp-153 is flexible linker. The domain III stretch occupies residues Asp-153–Lys-203.

Belongs to the RuvA family. As to quaternary structure, homotetramer. Forms an RuvA(8)-RuvB(12)-Holliday junction (HJ) complex. HJ DNA is sandwiched between 2 RuvA tetramers; dsDNA enters through RuvA and exits via RuvB. An RuvB hexamer assembles on each DNA strand where it exits the tetramer. Each RuvB hexamer is contacted by two RuvA subunits (via domain III) on 2 adjacent RuvB subunits; this complex drives branch migration. In the full resolvosome a probable DNA-RuvA(4)-RuvB(12)-RuvC(2) complex forms which resolves the HJ.

It is found in the cytoplasm. Its function is as follows. The RuvA-RuvB-RuvC complex processes Holliday junction (HJ) DNA during genetic recombination and DNA repair, while the RuvA-RuvB complex plays an important role in the rescue of blocked DNA replication forks via replication fork reversal (RFR). RuvA specifically binds to HJ cruciform DNA, conferring on it an open structure. The RuvB hexamer acts as an ATP-dependent pump, pulling dsDNA into and through the RuvAB complex. HJ branch migration allows RuvC to scan DNA until it finds its consensus sequence, where it cleaves and resolves the cruciform DNA. This is Holliday junction branch migration complex subunit RuvA from Latilactobacillus sakei subsp. sakei (strain 23K) (Lactobacillus sakei subsp. sakei).